The following is an 80-amino-acid chain: FXYD domain-containing ion transport regulator 7 (80 aa).

Residues 1-22 lie on the Extracellular side of the membrane; that stretch reads MATPTQSPTNVPEETDPFFYDY. Residues threonine 3, threonine 5, and threonine 9 are each glycosylated (O-linked (GlcNAc) threonine). The helical transmembrane segment at 23-45 threads the bilayer; that stretch reads ATVQTVGMTLATIMFVLGIIIII. Residues 46–80 lie on the Cytoplasmic side of the membrane; that stretch reads SKKVKCRKADSRSESPTCKSCKSELPSSAPGGGGV. The interval 56–80 is disordered; it reads SRSESPTCKSCKSELPSSAPGGGGV. The residue at position 73 (serine 73) is a Phosphoserine.

It belongs to the FXYD family. In terms of assembly, regulatory subunit of the sodium/potassium-transporting ATPase which is composed of a catalytic alpha subunit, a non-catalytic beta subunit and an additional regulatory subunit. The regulatory subunit, a member of the FXYD protein family, modulates the enzymatic activity in a tissue- and isoform-specific way by changing affinities of the Na+/K+-ATPase toward Na(+), K(+) or ATP. In terms of processing, O-glycosylated; required for stabilization and translocation to the plasma membrane. As to expression, expressed specifically in brain. Expressed in both neurons and glia.

Its subcellular location is the cell membrane. Its function is as follows. Associates with and regulates the activity of the sodium/potassium-transporting ATPase (NKA) which catalyzes the hydrolysis of ATP coupled with the exchange of Na(+) and K(+) ions across the plasma membrane. Reduces the apparent affinity for external K(+), an effect that depends on the presence of external Na(+) and voltage. Increases the apparent affinity for intracellular Na(+). The protein is FXYD domain-containing ion transport regulator 7 (Fxyd7) of Rattus norvegicus (Rat).